The chain runs to 108 residues: Structural protein 1 (108 aa).

Residues 1-77 (MSRVSEYGVP…LKMQMDRLCN (77 aa)) lie on the Intravirion side of the membrane. The helical; Signal-anchor for type II membrane protein transmembrane segment at 78–98 (VLGVVLQMATLALVTYIAFVV) threads the bilayer. Over 99–108 (HTRATSCKRE) the chain is Virion surface.

Belongs to the varicellovirus ORF1 protein family. As to quaternary structure, homodimer. Post-translationally, phosphorylated.

It is found in the virion membrane. The protein localises to the host Golgi apparatus membrane. The protein is Structural protein 1 of Homo sapiens (Human).